Reading from the N-terminus, the 316-residue chain is Transaldolase (316 aa).

Lys131 (schiff-base intermediate with substrate) is an active-site residue.

This sequence belongs to the transaldolase family. Type 1 subfamily. As to quaternary structure, homodimer.

The protein localises to the cytoplasm. The catalysed reaction is D-sedoheptulose 7-phosphate + D-glyceraldehyde 3-phosphate = D-erythrose 4-phosphate + beta-D-fructose 6-phosphate. Its pathway is carbohydrate degradation; pentose phosphate pathway; D-glyceraldehyde 3-phosphate and beta-D-fructose 6-phosphate from D-ribose 5-phosphate and D-xylulose 5-phosphate (non-oxidative stage): step 2/3. Functionally, transaldolase is important for the balance of metabolites in the pentose-phosphate pathway. This chain is Transaldolase, found in Glaesserella parasuis serovar 5 (strain SH0165) (Haemophilus parasuis).